We begin with the raw amino-acid sequence, 661 residues long: Pentatricopeptide repeat-containing protein At5g66631 (661 aa).

9 PPR repeats span residues 139–173, 176–210, 211–245, 246–280, 410–444, 445–475, 484–518, 519–553, and 554–588; these read VHFS…GEEK, CTES…GGIP, NSRT…RITR, TLKH…GKFP, DAYT…GIKL, PFST…DRTL, LMLL…GVSP, DIQT…GLEP, and DPYM…NLMP.

The protein belongs to the PPR family. P subfamily.

The protein is Pentatricopeptide repeat-containing protein At5g66631 of Arabidopsis thaliana (Mouse-ear cress).